Reading from the N-terminus, the 131-residue chain is Profilin-5 (131 aa).

Cysteines 13 and 115 form a disulfide. The short motif at V81–T97 is the Involved in PIP2 interaction element. The residue at position 111 (T111) is a Phosphothreonine.

Belongs to the profilin family. As to quaternary structure, multimer. Occurs in many kinds of cells as a complex with monomeric actin in a 1:1 ratio. Phosphorylated by MAP kinases. In terms of tissue distribution, expressed in vegetative tissues. Present in shoots, roots and coleoptiles. Also detected in endosperm and pollen.

It localises to the cytoplasm. Its subcellular location is the cytoskeleton. Actin binding is enhanced by calcium Ca(2+). Binds to actin and affects the structure of the cytoskeleton. At high concentrations, profilin prevents the polymerization of actin, whereas it enhances it at low concentrations. By binding to PIP2, it inhibits the formation of IP3 and DG. Has a high affinity for poly-proline. In Zea mays (Maize), this protein is Profilin-5.